The sequence spans 85 residues: Small ribosomal subunit protein eS21 (85 aa).

This sequence belongs to the eukaryotic ribosomal protein eS21 family. As to quaternary structure, component of the 40S small ribosomal subunit.

It localises to the cytoplasm. The protein localises to the cytosol. It is found in the rough endoplasmic reticulum. The polypeptide is Small ribosomal subunit protein eS21 (RPS21) (Branchiostoma belcheri (Amphioxus)).